A 270-amino-acid polypeptide reads, in one-letter code: Putative pyruvate, phosphate dikinase regulatory protein (270 aa).

An ADP-binding site is contributed by 151–158; the sequence is GVSRTSKT.

This sequence belongs to the pyruvate, phosphate/water dikinase regulatory protein family. PDRP subfamily.

The enzyme catalyses N(tele)-phospho-L-histidyl/L-threonyl-[pyruvate, phosphate dikinase] + ADP = N(tele)-phospho-L-histidyl/O-phospho-L-threonyl-[pyruvate, phosphate dikinase] + AMP + H(+). The catalysed reaction is N(tele)-phospho-L-histidyl/O-phospho-L-threonyl-[pyruvate, phosphate dikinase] + phosphate + H(+) = N(tele)-phospho-L-histidyl/L-threonyl-[pyruvate, phosphate dikinase] + diphosphate. Its function is as follows. Bifunctional serine/threonine kinase and phosphorylase involved in the regulation of the pyruvate, phosphate dikinase (PPDK) by catalyzing its phosphorylation/dephosphorylation. The sequence is that of Putative pyruvate, phosphate dikinase regulatory protein from Ligilactobacillus salivarius (strain UCC118) (Lactobacillus salivarius).